Consider the following 221-residue polypeptide: Ependymin-2 (221 aa).

The N-terminal stretch at M1 to A21 is a signal peptide. Residues N33, N73, and N97 are each glycosylated (N-linked (GlcNAc...) asparagine).

Belongs to the ependymin family. Post-translationally, binds calcium through the terminal sialic acids. In terms of tissue distribution, EPDs are synthesized in the meninx and secreted in the cerebrospinal fluid.

The protein localises to the secreted. Functionally, may play a role in neural plasticity. May be involved during axon regeneration. The sequence is that of Ependymin-2 (epd2) from Oncorhynchus mykiss (Rainbow trout).